A 279-amino-acid polypeptide reads, in one-letter code: Phosphatidylglycerol--prolipoprotein diacylglyceryl transferase (279 aa).

4 helical membrane-spanning segments follow: residues 4 to 24 (IGPL…FLGY), 44 to 64 (VVFW…VLTS), 76 to 96 (LYIW…GLTF), and 104 to 124 (GYPL…GIVA). Arg126 lines the a 1,2-diacyl-sn-glycero-3-phospho-(1'-sn-glycerol) pocket. Helical transmembrane passes span 182 to 202 (LTQV…LYWL), 206 to 226 (PFYG…RSVL), and 245 to 265 (LGIG…LLSL).

The protein belongs to the Lgt family.

It localises to the cell inner membrane. It carries out the reaction L-cysteinyl-[prolipoprotein] + a 1,2-diacyl-sn-glycero-3-phospho-(1'-sn-glycerol) = an S-1,2-diacyl-sn-glyceryl-L-cysteinyl-[prolipoprotein] + sn-glycerol 1-phosphate + H(+). Its pathway is protein modification; lipoprotein biosynthesis (diacylglyceryl transfer). Catalyzes the transfer of the diacylglyceryl group from phosphatidylglycerol to the sulfhydryl group of the N-terminal cysteine of a prolipoprotein, the first step in the formation of mature lipoproteins. This chain is Phosphatidylglycerol--prolipoprotein diacylglyceryl transferase, found in Thermus thermophilus (strain ATCC 27634 / DSM 579 / HB8).